The sequence spans 101 residues: MTMNGIPVKLLNEAQGHIVSLELTTGATYRGKLVESEDSMNVQLRDVIATEPQGAVTHMDQIFVRGSQIKFIVVPDLLKNAPLFKKNSSRPMPPIRGPKRR.

Residues 6 to 78 form the Sm domain; it reads IPVKLLNEAQ…IKFIVVPDLL (73 aa).

This sequence belongs to the snRNP core protein family. In terms of assembly, component of the Sm core complex, present in spliceosomal snRNP U1, U2, U4/U6 and U5. The core complex contains SMB1, SMD1, SMD2, SMD3, SME1, SMX3 and SMX2 (Sm proteins B, D1, D2, D3, E, F and G, respectively), and is probably a heptameric ring structure. SMD3 specifically interacts with SMB1. Belongs to the CWC complex (or CEF1-associated complex), a spliceosome sub-complex reminiscent of a late-stage spliceosome composed of the U2, U5 and U6 snRNAs and at least BUD13, BUD31, BRR2, CDC40, CEF1, CLF1, CUS1, CWC2, CWC15, CWC21, CWC22, CWC23, CWC24, CWC25, CWC27, ECM2, HSH155, IST3, ISY1, LEA1, MSL1, NTC20, PRP8, PRP9, PRP11, PRP19, PRP21, PRP22, PRP45, PRP46, SLU7, SMB1, SMD1, SMD2, SMD3, SMX2, SMX3, SNT309, SNU114, SPP2, SYF1, SYF2, RSE1 and YJU2. Component of the U4/U6-U5 tri-snRNP complex composed of the U4, U6 and U5 snRNAs and at least PRP3, PRP4, PRP6, PRP8, PRP18, PRP31, PRP38, SNU13, SNU23, SNU66, SNU114, SPP381, SMB1, SMD1, SMD2, SMD3, SMX2, SMX3, LSM2, LSM3, LSM4, LSM5, LSM6, LSM7, LSM8, BRR2 and DIB1.

It is found in the cytoplasm. The protein localises to the cytosol. It localises to the nucleus. Functionally, plays a role in pre-mRNA splicing as a core component of the spliceosomal U1, U2, U4 and U5 small nuclear ribonucleoproteins (snRNPs), the building blocks of the spliceosome. Also binds telomerase RNA and is required for its accumulation. The polypeptide is Small nuclear ribonucleoprotein Sm D3 (SMD3) (Saccharomyces cerevisiae (strain ATCC 204508 / S288c) (Baker's yeast)).